The primary structure comprises 916 residues: Chitin synthase B (916 aa).

Disordered stretches follow at residues Met1–His84 and Ser114–Leu141. N-linked (GlcNAc...) asparagine glycosylation occurs at Asn18. Residues Arg60–Glu75 are compositionally biased toward polar residues. Asn546 carries an N-linked (GlcNAc...) asparagine glycan. 7 consecutive transmembrane segments (helical) span residues Met572–Ala594, Ile628–Ala648, Ser663–Val683, Ile715–Leu735, Ser743–Phe763, Leu845–Met865, and Ala884–Leu904.

The protein belongs to the chitin synthase family. Class III subfamily.

It is found in the cell membrane. It carries out the reaction [(1-&gt;4)-N-acetyl-beta-D-glucosaminyl](n) + UDP-N-acetyl-alpha-D-glucosamine = [(1-&gt;4)-N-acetyl-beta-D-glucosaminyl](n+1) + UDP + H(+). Polymerizes chitin, a structural polymer of the cell wall and septum, by transferring the sugar moiety of UDP-GlcNAc to the non-reducing end of the growing chitin polymer. Involved in hyphal growth and more particularly in branching. This Aspergillus oryzae (strain ATCC 42149 / RIB 40) (Yellow koji mold) protein is Chitin synthase B.